We begin with the raw amino-acid sequence, 379 residues long: Protein-glutamate methylesterase/protein-glutamine glutaminase (379 aa).

The Response regulatory domain maps to 4 to 121 (KVLVVDDSSF…AKNSDEAGSL (118 aa)). D55 bears the 4-aspartylphosphate mark. Residues 185-379 (SGKEYKLLAI…ASMVKEISRG (195 aa)) enclose the CheB-type methylesterase domain. Catalysis depends on residues S197, H224, and D321.

It belongs to the CheB family. Phosphorylated by CheA. Phosphorylation of the N-terminal regulatory domain activates the methylesterase activity.

It localises to the cytoplasm. It catalyses the reaction [protein]-L-glutamate 5-O-methyl ester + H2O = L-glutamyl-[protein] + methanol + H(+). The catalysed reaction is L-glutaminyl-[protein] + H2O = L-glutamyl-[protein] + NH4(+). Involved in chemotaxis. Part of a chemotaxis signal transduction system that modulates chemotaxis in response to various stimuli. Catalyzes the demethylation of specific methylglutamate residues introduced into the chemoreceptors (methyl-accepting chemotaxis proteins or MCP) by CheR. Also mediates the irreversible deamidation of specific glutamine residues to glutamic acid. In Colwellia psychrerythraea (strain 34H / ATCC BAA-681) (Vibrio psychroerythus), this protein is Protein-glutamate methylesterase/protein-glutamine glutaminase.